We begin with the raw amino-acid sequence, 439 residues long: Exodeoxyribonuclease 7 large subunit (439 aa).

This sequence belongs to the XseA family. In terms of assembly, heterooligomer composed of large and small subunits.

It is found in the cytoplasm. It carries out the reaction Exonucleolytic cleavage in either 5'- to 3'- or 3'- to 5'-direction to yield nucleoside 5'-phosphates.. Its function is as follows. Bidirectionally degrades single-stranded DNA into large acid-insoluble oligonucleotides, which are then degraded further into small acid-soluble oligonucleotides. This chain is Exodeoxyribonuclease 7 large subunit, found in Haemophilus influenzae (strain 86-028NP).